A 1405-amino-acid polypeptide reads, in one-letter code: DNA-directed RNA polymerase subunit beta' (1405 aa).

Zn(2+) is bound by residues C65, C67, C80, and C83. The Mg(2+) site is built by D468, D470, and D472. C811, C885, C892, and C895 together coordinate Zn(2+).

The protein belongs to the RNA polymerase beta' chain family. As to quaternary structure, the RNAP catalytic core consists of 2 alpha, 1 beta, 1 beta' and 1 omega subunit. When a sigma factor is associated with the core the holoenzyme is formed, which can initiate transcription. Mg(2+) serves as cofactor. It depends on Zn(2+) as a cofactor.

The enzyme catalyses RNA(n) + a ribonucleoside 5'-triphosphate = RNA(n+1) + diphosphate. DNA-dependent RNA polymerase catalyzes the transcription of DNA into RNA using the four ribonucleoside triphosphates as substrates. The protein is DNA-directed RNA polymerase subunit beta' of Azobacteroides pseudotrichonymphae genomovar. CFP2.